A 286-amino-acid polypeptide reads, in one-letter code: Nucleotide-binding protein Tgr7_0722 (286 aa).

Gly-8–Ser-15 is a binding site for ATP. Asp-60–Ser-63 contributes to the GTP binding site.

Belongs to the RapZ-like family.

In terms of biological role, displays ATPase and GTPase activities. This chain is Nucleotide-binding protein Tgr7_0722, found in Thioalkalivibrio sulfidiphilus (strain HL-EbGR7).